The chain runs to 116 residues: NADH-ubiquinone oxidoreductase chain 3 (116 aa).

3 helical membrane passes run 4-24 (LIIT…IAFW), 56-76 (FFLI…LLPL), and 88-108 (TLIL…YEWI).

It belongs to the complex I subunit 3 family. Core subunit of respiratory chain NADH dehydrogenase (Complex I) which is composed of 45 different subunits. Interacts with TMEM186. Interacts with TMEM242.

It localises to the mitochondrion inner membrane. It catalyses the reaction a ubiquinone + NADH + 5 H(+)(in) = a ubiquinol + NAD(+) + 4 H(+)(out). In terms of biological role, core subunit of the mitochondrial membrane respiratory chain NADH dehydrogenase (Complex I) which catalyzes electron transfer from NADH through the respiratory chain, using ubiquinone as an electron acceptor. Essential for the catalytic activity of complex I. The protein is NADH-ubiquinone oxidoreductase chain 3 of Osphranter robustus (Wallaroo).